Here is a 154-residue protein sequence, read N- to C-terminus: Myoglobin (154 aa).

A Globin domain is found at 2–148 (GLSDGEWQIV…FRNDIAAKYK (147 aa)). Phosphoserine is present on Ser-4. His-65 is a nitrite binding site. An O2-binding site is contributed by His-65. Position 68 is a phosphothreonine (Thr-68). His-94 is a heme b binding site.

The protein belongs to the globin family. In terms of assembly, monomeric.

It is found in the cytoplasm. It localises to the sarcoplasm. It catalyses the reaction Fe(III)-heme b-[protein] + nitric oxide + H2O = Fe(II)-heme b-[protein] + nitrite + 2 H(+). The catalysed reaction is H2O2 + AH2 = A + 2 H2O. Monomeric heme protein which primary function is to store oxygen and facilitate its diffusion within muscle tissues. Reversibly binds oxygen through a pentacoordinated heme iron and enables its timely and efficient release as needed during periods of heightened demand. Depending on the oxidative conditions of tissues and cells, and in addition to its ability to bind oxygen, it also has a nitrite reductase activity whereby it regulates the production of bioactive nitric oxide. Under stress conditions, like hypoxia and anoxia, it also protects cells against reactive oxygen species thanks to its pseudoperoxidase activity. The chain is Myoglobin (MB) from Lycaon pictus (African wild dog).